The sequence spans 359 residues: Acetoin catabolism protein X (359 aa).

It is found in the cell membrane. It functions in the pathway ketone degradation; acetoin degradation. Essential for acetoin catabolism. This chain is Acetoin catabolism protein X (acoX), found in Cupriavidus necator (strain ATCC 17699 / DSM 428 / KCTC 22496 / NCIMB 10442 / H16 / Stanier 337) (Ralstonia eutropha).